A 32-amino-acid polypeptide reads, in one-letter code: uncharacterized protein (32 aa).

A helical transmembrane segment spans residues 3–23 (IGIIFPVVIFITAVVFLAWFF).

It localises to the cell inner membrane. This is an uncharacterized protein from Escherichia coli (strain K12).